The chain runs to 424 residues: Tyrosine--tRNA ligase (424 aa).

Residue Tyr37 participates in L-tyrosine binding. The short motif at 42–51 is the 'HIGH' region element; sequence PTADSLHLGH. N6-acetyllysine is present on Lys144. The L-tyrosine site is built by Tyr175 and Gln179. A 'KMSKS' region motif is present at residues 235–239; the sequence is KFGKT. Lys238 serves as a coordination point for ATP. An S4 RNA-binding domain is found at 357 to 414; sequence ADLMQALVDSELQPSRGQARKTIASNAVTINGEKQSDPEYFFKEEDRLFGRFTLLRRG.

It belongs to the class-I aminoacyl-tRNA synthetase family. TyrS type 1 subfamily. As to quaternary structure, homodimer.

It localises to the cytoplasm. It catalyses the reaction tRNA(Tyr) + L-tyrosine + ATP = L-tyrosyl-tRNA(Tyr) + AMP + diphosphate + H(+). Catalyzes the attachment of tyrosine to tRNA(Tyr) in a two-step reaction: tyrosine is first activated by ATP to form Tyr-AMP and then transferred to the acceptor end of tRNA(Tyr). This Escherichia fergusonii (strain ATCC 35469 / DSM 13698 / CCUG 18766 / IAM 14443 / JCM 21226 / LMG 7866 / NBRC 102419 / NCTC 12128 / CDC 0568-73) protein is Tyrosine--tRNA ligase.